Consider the following 192-residue polypeptide: Cytidylate kinase (192 aa).

Residue 12–20 (GLAGSGTTT) coordinates ATP.

The protein belongs to the cytidylate kinase family. Type 2 subfamily.

The protein resides in the cytoplasm. The enzyme catalyses CMP + ATP = CDP + ADP. The catalysed reaction is dCMP + ATP = dCDP + ADP. The protein is Cytidylate kinase (cmk) of Pyrococcus horikoshii (strain ATCC 700860 / DSM 12428 / JCM 9974 / NBRC 100139 / OT-3).